The primary structure comprises 226 residues: ATP synthase F(0) complex subunit a (226 aa).

M1 is modified (N-formylmethionine). Transmembrane regions (helical) follow at residues 9-29, 68-88, 97-117, 138-158, 164-184, and 189-209; these read FITPVILGLPLVTLIVLFPSL, WTLMLMSLILFIGSTNLLGLL, QLSMNLGMAIPLWAGAVITGF, IPMLVIIETISLFIQPMALAV, ITAGHLLIHLIGGATLALMSI, and ALITFTILILLTILEFAVAMI.

The protein belongs to the ATPase A chain family. Component of the ATP synthase complex composed at least of ATP5F1A/subunit alpha, ATP5F1B/subunit beta, ATP5MC1/subunit c (homooctomer), MT-ATP6/subunit a, MT-ATP8/subunit 8, ATP5ME/subunit e, ATP5MF/subunit f, ATP5MG/subunit g, ATP5MK/subunit k, ATP5MJ/subunit j, ATP5F1C/subunit gamma, ATP5F1D/subunit delta, ATP5F1E/subunit epsilon, ATP5PF/subunit F6, ATP5PB/subunit b, ATP5PD/subunit d, ATP5PO/subunit OSCP. ATP synthase complex consists of a soluble F(1) head domain (subunits alpha(3) and beta(3)) - the catalytic core - and a membrane F(0) domain - the membrane proton channel (subunits c, a, 8, e, f, g, k and j). These two domains are linked by a central stalk (subunits gamma, delta, and epsilon) rotating inside the F1 region and a stationary peripheral stalk (subunits F6, b, d, and OSCP). Interacts with DNAJC30; interaction is direct.

It localises to the mitochondrion inner membrane. It catalyses the reaction H(+)(in) = H(+)(out). Subunit a, of the mitochondrial membrane ATP synthase complex (F(1)F(0) ATP synthase or Complex V) that produces ATP from ADP in the presence of a proton gradient across the membrane which is generated by electron transport complexes of the respiratory chain. ATP synthase complex consist of a soluble F(1) head domain - the catalytic core - and a membrane F(1) domain - the membrane proton channel. These two domains are linked by a central stalk rotating inside the F(1) region and a stationary peripheral stalk. During catalysis, ATP synthesis in the catalytic domain of F(1) is coupled via a rotary mechanism of the central stalk subunits to proton translocation. With the subunit c (ATP5MC1), forms the proton-conducting channel in the F(0) domain, that contains two crucial half-channels (inlet and outlet) that facilitate proton movement from the mitochondrial intermembrane space (IMS) into the matrix. Protons are taken up via the inlet half-channel and released through the outlet half-channel, following a Grotthuss mechanism. The sequence is that of ATP synthase F(0) complex subunit a from Bos taurus (Bovine).